The following is a 197-amino-acid chain: MSSLLEQLIEAFRVLPGVGQKSAQRMAYHVLEREREGGRRLATTLANAVEKVGHCVQCRDFTESEICTICASSSRDRQQLCVVESPADRLAIEHATGYRGLYFVLQGRLSPLDGIGPRELGLDRLGERLAAGEVTEMIIATNATVEGEATAHYLAQLARQHAVRPSRLAQGMPLGGELEYVDRGTLSHAFGTRSEVL.

The C4-type zinc finger occupies 55 to 70 (CVQCRDFTESEICTIC). The region spanning 78 to 173 (QQLCVVESPA…RPSRLAQGMP (96 aa)) is the Toprim domain.

Belongs to the RecR family.

In terms of biological role, may play a role in DNA repair. It seems to be involved in an RecBC-independent recombinational process of DNA repair. It may act with RecF and RecO. The protein is Recombination protein RecR of Xanthomonas oryzae pv. oryzae (strain MAFF 311018).